The following is a 562-amino-acid chain: Formate--tetrahydrofolate ligase (562 aa).

Residue 70–77 participates in ATP binding; that stretch reads TPAGEGKS.

Belongs to the formate--tetrahydrofolate ligase family.

It carries out the reaction (6S)-5,6,7,8-tetrahydrofolate + formate + ATP = (6R)-10-formyltetrahydrofolate + ADP + phosphate. It participates in one-carbon metabolism; tetrahydrofolate interconversion. In Paenarthrobacter aurescens (strain TC1), this protein is Formate--tetrahydrofolate ligase.